The primary structure comprises 1801 residues: Focadhesin (1801 aa).

Residue K819 is modified to N6-acetyllysine.

In terms of assembly, interacts with VCL. Ubiquitous. High expression in brain followed by testis, muscle, pancreas, heart, ovary, small intestine, placenta, prostate, thymus, kidney, colon, liver, lung, spleen and leukocytes. Expression is reduced in most glioblastomas and all glioblastoma cell lines.

Its subcellular location is the cell junction. The protein resides in the focal adhesion. It localises to the cytoplasm. It is found in the cytosol. Its function is as follows. Required for the maintenance of SKIC2 and SKIC3 proteostatic levels in the liver. May be involved in the regulation of RNA degradation by the exosome complex. Potential tumor suppressor in gliomas. In Homo sapiens (Human), this protein is Focadhesin.